The sequence spans 132 residues: Translation initiation factor 5A (132 aa).

Lysine 36 carries the post-translational modification Hypusine.

Belongs to the eIF-5A family.

Its subcellular location is the cytoplasm. In terms of biological role, functions by promoting the formation of the first peptide bond. The polypeptide is Translation initiation factor 5A (Methanosphaera stadtmanae (strain ATCC 43021 / DSM 3091 / JCM 11832 / MCB-3)).